A 124-amino-acid chain; its full sequence is Small ribosomal subunit protein uS12 (124 aa).

Residues 1–32 (MPTIQQLVRKGRQAKTTKTKTPALKGSPQRRG) are disordered. Basic residues predominate over residues 9-18 (RKGRQAKTTK). Residue Asp-89 is modified to 3-methylthioaspartic acid. The disordered stretch occupies residues 105–124 (QGVRNRKQARSRYGAKKEKS). Over residues 108 to 118 (RNRKQARSRYG) the composition is skewed to basic residues.

This sequence belongs to the universal ribosomal protein uS12 family. As to quaternary structure, part of the 30S ribosomal subunit. Contacts proteins S8 and S17. May interact with IF1 in the 30S initiation complex.

In terms of biological role, with S4 and S5 plays an important role in translational accuracy. Interacts with and stabilizes bases of the 16S rRNA that are involved in tRNA selection in the A site and with the mRNA backbone. Located at the interface of the 30S and 50S subunits, it traverses the body of the 30S subunit contacting proteins on the other side and probably holding the rRNA structure together. The combined cluster of proteins S8, S12 and S17 appears to hold together the shoulder and platform of the 30S subunit. The sequence is that of Small ribosomal subunit protein uS12 from Salinispora arenicola (strain CNS-205).